We begin with the raw amino-acid sequence, 509 residues long: Subtelomeric hrmA-associated cluster protein AFUB_078990 (509 aa).

Its function is as follows. Part of the subtelomeric hrmA-associated cluster (HAC) containing genes that alter the hyphal surface (such as reduced total chitin or increased beta-glucan exposure) and perturb inter-hyphal interactions within the developing biofilms, resulting in a loss of vertically aligned polarized growing filaments. Consequently, this hypoxia-typic morphotype (called H-MORPH) with altered biofilm architecture leads to increased hypoxia fitness, increased host inflammation, rapid disease progression, and mortality in a murine model of invasive aspergillosis. The chain is Subtelomeric hrmA-associated cluster protein AFUB_078990 from Aspergillus fumigatus (strain CBS 144.89 / FGSC A1163 / CEA10) (Neosartorya fumigata).